The sequence spans 199 residues: Phosphoserine phosphatase RsbX (199 aa).

The 188-residue stretch at 11 to 198 (QTLVYQLNKE…DDLTYILGQL (188 aa)) folds into the PPM-type phosphatase domain.

It carries out the reaction O-phospho-L-serine + H2O = L-serine + phosphate. The catalysed reaction is O-phospho-D-serine + H2O = D-serine + phosphate. Functionally, negative regulator of sigma-B activity. Dephosphorylates RsbS. Plays a role both in maintaining low sigma-B activity during growth and in reestablishing prestress sigma-B activity after induction. Could have a negative feedback role by indirectly communicating sigma-B protein levels. The protein is Phosphoserine phosphatase RsbX (rsbX) of Bacillus subtilis (strain 168).